The primary structure comprises 382 residues: Serine/threonine-protein phosphatase 2A activator 2 (382 aa).

The disordered stretch occupies residues 363-382; the sequence is SHKGVPTLGNRPGIKPIPFD.

Belongs to the PTPA-type PPIase family.

Its subcellular location is the cytoplasm. The catalysed reaction is [protein]-peptidylproline (omega=180) = [protein]-peptidylproline (omega=0). PPIases accelerate the folding of proteins. It catalyzes the cis-trans isomerization of proline imidic peptide bonds in oligopeptides. Acts as a regulatory subunit for PP2A-like phosphatases modulating their activity or substrate specificity, probably by inducing a conformational change in the catalytic subunit, a direct target of the PPIase. Can reactivate inactive phosphatase PP2A-phosphatase methylesterase complexes (PP2Ai) in presence of ATP and Mg(2+) by dissociating the inactive form from the complex. The chain is Serine/threonine-protein phosphatase 2A activator 2 (RRD2) from Cryptococcus neoformans var. neoformans serotype D (strain B-3501A) (Filobasidiella neoformans).